Here is a 280-residue protein sequence, read N- to C-terminus: MKLVMVSGRSGSGKSVALRVLEDLGYYCVDNLPLPLMDTLLEQLKDSTELVAISVDVRNMHETELDKQLSNLPEGTELLSFFLNSSDEVLLKRYSETRRLHPLSRSKTSLKEAIDHERILLEPVSKLVDHYIDTSNLNIYDLSNQVREILLGSVDKELVINFESFGFKHGMPAEADFMFDVRFLPNPHWEPELRPMTGLDEPVQLFLSQQPTVNKFIWQIENLLETWLPHLERNNRSYLTIAIGCTGGQHRSVYVTEQLAKLFSQSKHTVQARHRELSND.

Residue 8–15 coordinates ATP; that stretch reads GRSGSGKS. Residue 56–59 coordinates GTP; the sequence is DVRN.

This sequence belongs to the RapZ-like family.

Displays ATPase and GTPase activities. This chain is Nucleotide-binding protein Swoo_4243, found in Shewanella woodyi (strain ATCC 51908 / MS32).